We begin with the raw amino-acid sequence, 186 residues long: Ribosome-recycling factor (186 aa).

Positions 135 to 164 (DGMDDLKKAEKDGEIGQDESRAQSERVQKM) are disordered.

The protein belongs to the RRF family.

The protein resides in the cytoplasm. Functionally, responsible for the release of ribosomes from messenger RNA at the termination of protein biosynthesis. May increase the efficiency of translation by recycling ribosomes from one round of translation to another. This Sinorhizobium medicae (strain WSM419) (Ensifer medicae) protein is Ribosome-recycling factor.